The primary structure comprises 639 residues: Protein phosphatase EYA4 (639 aa).

M1 carries the N-acetylmethionine modification. 3 disordered regions span residues M1–N72, Q210–G232, and A300–L368. Residue K14 forms a Glycyl lysine isopeptide (Lys-Gly) (interchain with G-Cter in SUMO2) linkage. Residues E18 to M30 show a composition bias toward polar residues. Residue K52 forms a Glycyl lysine isopeptide (Lys-Gly) (interchain with G-Cter in SUMO2) linkage. The span at S56–N66 shows a compositional bias: low complexity. Residues A300–T334 show a composition bias toward polar residues. S361 is subject to Phosphoserine. Residue D375 is the Nucleophile of the active site. D375, D377, and D603 together coordinate Mg(2+). The active-site Proton donor is the D377.

This sequence belongs to the HAD-like hydrolase superfamily. EYA family. Interacts with SIX3; translocates EYA4 from the cytoplasm to the nucleus and promotes activation of their target genes. Mg(2+) is required as a cofactor. Highly expressed in heart and skeletal muscle.

Its subcellular location is the cytoplasm. It localises to the nucleus. The enzyme catalyses O-phospho-L-tyrosyl-[protein] + H2O = L-tyrosyl-[protein] + phosphate. Its function is as follows. Tyrosine phosphatase that specifically dephosphorylates 'Tyr-142' of histone H2AX (H2AXY142ph). 'Tyr-142' phosphorylation of histone H2AX plays a central role in DNA repair and acts as a mark that distinguishes between apoptotic and repair responses to genotoxic stress. Promotes efficient DNA repair by dephosphorylating H2AX, promoting the recruitment of DNA repair complexes containing MDC1. Its function as histone phosphatase probably explains its role in transcription regulation during organogenesis. May be involved in development of the eye. In Homo sapiens (Human), this protein is Protein phosphatase EYA4 (EYA4).